A 329-amino-acid chain; its full sequence is NADH-quinone oxidoreductase subunit H 1 (329 aa).

8 consecutive transmembrane segments (helical) span residues 12–32, 78–98, 120–140, 159–179, 191–211, 242–262, 270–290, and 308–328; these read LAKI…LVFA, WLFY…FAVI, VGLL…ALGG, LISY…LAGS, GIWF…SIAA, LFFV…TTFF, WLPP…FFIW, and WKVL…ILML.

Belongs to the complex I subunit 1 family. NDH-1 is composed of 14 different subunits. Subunits NuoA, H, J, K, L, M, N constitute the membrane sector of the complex.

The protein resides in the cell inner membrane. The enzyme catalyses a quinone + NADH + 5 H(+)(in) = a quinol + NAD(+) + 4 H(+)(out). In terms of biological role, NDH-1 shuttles electrons from NADH, via FMN and iron-sulfur (Fe-S) centers, to quinones in the respiratory chain. The immediate electron acceptor for the enzyme in this species is believed to be ubiquinone. Couples the redox reaction to proton translocation (for every two electrons transferred, four hydrogen ions are translocated across the cytoplasmic membrane), and thus conserves the redox energy in a proton gradient. This subunit may bind ubiquinone. The chain is NADH-quinone oxidoreductase subunit H 1 from Geobacter metallireducens (strain ATCC 53774 / DSM 7210 / GS-15).